We begin with the raw amino-acid sequence, 227 residues long: 7-cyano-7-deazaguanine synthase (227 aa).

ATP is bound at residue 8–18; the sequence is FSGGQDSTTCL. Positions 187, 196, 199, and 202 each coordinate Zn(2+).

Belongs to the QueC family. Requires Zn(2+) as cofactor.

The enzyme catalyses 7-carboxy-7-deazaguanine + NH4(+) + ATP = 7-cyano-7-deazaguanine + ADP + phosphate + H2O + H(+). Its pathway is purine metabolism; 7-cyano-7-deazaguanine biosynthesis. In terms of biological role, catalyzes the ATP-dependent conversion of 7-carboxy-7-deazaguanine (CDG) to 7-cyano-7-deazaguanine (preQ(0)). In Shewanella pealeana (strain ATCC 700345 / ANG-SQ1), this protein is 7-cyano-7-deazaguanine synthase.